The chain runs to 588 residues: Juvenile hormone esterase (588 aa).

The N-terminal stretch at 1 to 23 (MKFPKNLFLVLFYTSWKFCDVCA) is a signal peptide. 2 N-linked (GlcNAc...) asparagine glycosylation sites follow: asparagine 79 and asparagine 83. An intrachain disulfide couples cysteine 91 to cysteine 109. Serine 214 serves as the catalytic Acyl-ester intermediate. N-linked (GlcNAc...) asparagine glycosylation is present at asparagine 257. A disulfide bond links cysteine 268 and cysteine 281. The active-site Charge relay system is glutamate 350. N-linked (GlcNAc...) asparagine glycosylation is found at asparagine 389, asparagine 396, and asparagine 472. The Charge relay system role is filled by histidine 479.

It belongs to the type-B carboxylesterase/lipase family.

The protein resides in the secreted. It catalyses the reaction juvenile hormone III + H2O = juvenile hormone III carboxylate + methanol + H(+). Inhibited by 3-octylthio-1,1,1-trifluoro-2-propanone (OTFP), a specific inhibitor of juvenile hormone esterase (JHE), but not by diisopropyl fluorophosphate (DFP), a serine enzyme inhibitor. Its function is as follows. May function as a juvenile hormone (JH)-specific degradation enzyme in vivo decreasing JH activity. Hydrolyzes JH III in vitro. Hydrolyzes effectively also methyl hepthylthioacetothioate (HEPTAT), a synthetic substrate. Of the general esterase substrates, it has preference for 2-naphthyl acetate (2-NA) and shows a weak activity for 1-NA and 4-nitrophenylacetate (4-NPA). The sequence is that of Juvenile hormone esterase from Tribolium castaneum (Red flour beetle).